Consider the following 215-residue polypeptide: Protein FAM27D1 (215 aa).

A disordered region spans residues 74–172 (QPKTHTHTGM…RGTQADLSSR (99 aa)). The segment covering 87 to 108 (THRERERNTQRLRDRERRENGR) has biased composition (basic and acidic residues). Residues 109–122 (HTHRHTHTLTHTHT) show a composition bias toward basic residues. Composition is skewed to basic and acidic residues over residues 123–139 (HRDTHTASYRRGIETHT) and 149–162 (SAHDENDPRVREQP). Residues 163–172 (RGTQADLSSR) are compositionally biased toward polar residues.

It belongs to the FAM27 family.

The chain is Protein FAM27D1 (FAM27D1) from Homo sapiens (Human).